A 306-amino-acid polypeptide reads, in one-letter code: Putative lipid kinase Sca_1050 (306 aa).

Residues 3–139 (QHFHRGILFY…FDVLKVNDTY (137 aa)) form the DAGKc domain. Residues Ser44, 74–80 (GDGTVNE), and Thr101 contribute to the ATP site. Mg(2+)-binding residues include Ser220, Asp223, and Glu225. Residue Glu281 is the Proton acceptor of the active site.

Belongs to the diacylglycerol/lipid kinase family. Mg(2+) serves as cofactor.

May catalyze the ATP-dependent phosphorylation of lipids other than diacylglycerol (DAG). The polypeptide is Putative lipid kinase Sca_1050 (Staphylococcus carnosus (strain TM300)).